Reading from the N-terminus, the 188-residue chain is Phosphatidylinositol N-acetylglucosaminyltransferase subunit H (188 aa).

Belongs to the PIGH family. Component of the glycosylphosphatidylinositol-N-acetylglucosaminyltransferase (GPI-GnT) complex composed at least by PIGA, PIGC, PIGH, PIGP, PIGQ, PIGY and DPM2. Interacts with PIGQ.

The protein resides in the cytoplasm. It functions in the pathway glycolipid biosynthesis; glycosylphosphatidylinositol-anchor biosynthesis. Functionally, part of the glycosylphosphatidylinositol-N-acetylglucosaminyltransferase (GPI-GnT) complex that catalyzes the transfer of N-acetylglucosamine from UDP-N-acetylglucosamine to phosphatidylinositol and participates in the first step of GPI biosynthesis. This is Phosphatidylinositol N-acetylglucosaminyltransferase subunit H from Mus musculus (Mouse).